The chain runs to 177 residues: Protein GrpE (177 aa).

Composition is skewed to basic and acidic residues over residues 1 to 19 (MAKH…KETV) and 29 to 41 (SPEK…ANER). The disordered stretch occupies residues 1–41 (MAKHKHEEHPEDVEVKETVETAEQAESASPEKSELELANER).

This sequence belongs to the GrpE family. Homodimer.

The protein localises to the cytoplasm. Functionally, participates actively in the response to hyperosmotic and heat shock by preventing the aggregation of stress-denatured proteins, in association with DnaK and GrpE. It is the nucleotide exchange factor for DnaK and may function as a thermosensor. Unfolded proteins bind initially to DnaJ; upon interaction with the DnaJ-bound protein, DnaK hydrolyzes its bound ATP, resulting in the formation of a stable complex. GrpE releases ADP from DnaK; ATP binding to DnaK triggers the release of the substrate protein, thus completing the reaction cycle. Several rounds of ATP-dependent interactions between DnaJ, DnaK and GrpE are required for fully efficient folding. The sequence is that of Protein GrpE from Streptococcus gordonii (strain Challis / ATCC 35105 / BCRC 15272 / CH1 / DL1 / V288).